Reading from the N-terminus, the 309-residue chain is SUR7 family protein FMP45 (309 aa).

Topologically, residues 1 to 5 (MIFKR) are cytoplasmic. A helical transmembrane segment spans residues 6–26 (FVNLLVFLFLLGAGLLTFFLI). Residues 27–116 (LSGGRESGTL…YYLSRVGWAM (90 aa)) lie on the Extracellular side of the membrane. N-linked (GlcNAc...) asparagine glycosylation occurs at asparagine 73. A helical membrane pass occupies residues 117 to 137 (LLISLFFIVLALVPGFLATFL). At 138–140 (PFK) the chain is on the cytoplasmic side. Residues 141 to 161 (AVPVLYCVLSWLAFFFIILAA) traverse the membrane as a helical segment. At 162–188 (CLYTGCYVKARKTFRNSGRSARLGPKN) the chain is on the extracellular side. Residues 189–209 (FAFIWTSVFLMLVNAIWSTIF) traverse the membrane as a helical segment. Topologically, residues 210–309 (SATHKAHSTY…GLAGPVTVRD (100 aa)) are cytoplasmic. Serine 230 and serine 232 each carry phosphoserine. Threonine 235 is modified (phosphothreonine). The segment at 253–309 (GPITAAPVVGQPQPTTTTTPAGNGKFFQKLKTRKQVPSAELEPAGDGGLAGPVTVRD) is disordered. Residues 258-274 (APVVGQPQPTTTTTPAG) are compositionally biased toward low complexity.

The protein belongs to the SUR7 family.

Its subcellular location is the cell membrane. Its function is as follows. Involved in sporulation and affects the sphingolipid composition of the plasma membrane. This chain is SUR7 family protein FMP45 (FMP45), found in Saccharomyces cerevisiae (strain ATCC 204508 / S288c) (Baker's yeast).